A 341-amino-acid polypeptide reads, in one-letter code: Tubulin-specific chaperone C (341 aa).

At Met1 the chain carries N-acetylmethionine. The span at 34-49 (ERQIEVERRKQKRQDQ) shows a compositional bias: basic and acidic residues. The disordered stretch occupies residues 34–55 (ERQIEVERRKQKRQDQEVEEEK). At Ser79 the chain carries Phosphoserine. The segment at 148 to 173 (TAQVDAAPVTSAAPSPPVTKEEEGAP) is disordered. Residues 163–318 (PPVTKEEEGA…NWDQVDDFNW (156 aa)) form the C-CAP/cofactor C-like domain.

The protein belongs to the TBCC family. In terms of assembly, supercomplex made of cofactors A to E. Cofactors A and D function by capturing and stabilizing tubulin in a quasi-native conformation. Cofactor E binds to the cofactor D-tubulin complex; interaction with cofactor C then causes the release of tubulin polypeptides that are committed to the native state.

Its subcellular location is the cytoplasm. In terms of biological role, tubulin-folding protein; involved in the final step of the tubulin folding pathway. This Mus musculus (Mouse) protein is Tubulin-specific chaperone C (Tbcc).